Reading from the N-terminus, the 158-residue chain is Rhombotin-2 (158 aa).

2 LIM zinc-binding domains span residues 28-90 (LTCG…LFGQ) and 92-154 (GLCA…WTKL).

As to expression, expression becomes restricted to the ventral blood island (VBI) as the embryo develops. In late neurula and early tailbud embryos, also expressed in the dorsal lateral plate (DLP), the site of definitive hematopoiesis in the tadpole. Expression in the DLP diminishes during tailbud stages. Expressed in circulating blood cells of tadpoles. Also expressed in non-hematopoietic sites, including the tailbud region and the central nervous system of early neurula embryos.

It is found in the nucleus. Transcription factor that acts synergistically with tal1/scl and gata1 to specify embryonic dorsal mesoderm to a hematopoietic fate. Induces globin gene expression together with fgf. The chain is Rhombotin-2 from Xenopus laevis (African clawed frog).